The primary structure comprises 55 residues: ATP synthase F(0) complex subunit 8 (55 aa).

The helical transmembrane segment at Pro-8–Ile-24 threads the bilayer. Residues Asn-35–Thr-55 form a disordered region.

This sequence belongs to the ATPase protein 8 family. As to quaternary structure, component of the ATP synthase complex composed at least of ATP5F1A/subunit alpha, ATP5F1B/subunit beta, ATP5MC1/subunit c (homooctomer), MT-ATP6/subunit a, MT-ATP8/subunit 8, ATP5ME/subunit e, ATP5MF/subunit f, ATP5MG/subunit g, ATP5MK/subunit k, ATP5MJ/subunit j, ATP5F1C/subunit gamma, ATP5F1D/subunit delta, ATP5F1E/subunit epsilon, ATP5PF/subunit F6, ATP5PB/subunit b, ATP5PD/subunit d, ATP5PO/subunit OSCP. ATP synthase complex consists of a soluble F(1) head domain (subunits alpha(3) and beta(3)) - the catalytic core - and a membrane F(0) domain - the membrane proton channel (subunits c, a, 8, e, f, g, k and j). These two domains are linked by a central stalk (subunits gamma, delta, and epsilon) rotating inside the F1 region and a stationary peripheral stalk (subunits F6, b, d, and OSCP).

It is found in the mitochondrion membrane. Its function is as follows. Subunit 8, of the mitochondrial membrane ATP synthase complex (F(1)F(0) ATP synthase or Complex V) that produces ATP from ADP in the presence of a proton gradient across the membrane which is generated by electron transport complexes of the respiratory chain. ATP synthase complex consist of a soluble F(1) head domain - the catalytic core - and a membrane F(1) domain - the membrane proton channel. These two domains are linked by a central stalk rotating inside the F(1) region and a stationary peripheral stalk. During catalysis, ATP synthesis in the catalytic domain of F(1) is coupled via a rotary mechanism of the central stalk subunits to proton translocation. In vivo, can only synthesize ATP although its ATP hydrolase activity can be activated artificially in vitro. Part of the complex F(0) domain. This Anas platyrhynchos (Mallard) protein is ATP synthase F(0) complex subunit 8.